A 299-amino-acid chain; its full sequence is Hemolysin C homolog (299 aa).

2 consecutive CBS domains span residues 80–142 (MVPR…NGRL) and 145–202 (LIRK…IDDE).

Belongs to the UPF0053 family. Hemolysin C subfamily.

The chain is Hemolysin C homolog (tlyC) from Rickettsia massiliae (strain Mtu5).